A 209-amino-acid polypeptide reads, in one-letter code: Uracil phosphoribosyltransferase (209 aa).

5-phospho-alpha-D-ribose 1-diphosphate is bound by residues Arg-79, Arg-104, and 131-139; that span reads DPMLATGGS. Uracil-binding positions include Ile-194 and 199 to 201; that span reads GDA. Residue Asp-200 coordinates 5-phospho-alpha-D-ribose 1-diphosphate.

This sequence belongs to the UPRTase family. Requires Mg(2+) as cofactor.

The catalysed reaction is UMP + diphosphate = 5-phospho-alpha-D-ribose 1-diphosphate + uracil. It participates in pyrimidine metabolism; UMP biosynthesis via salvage pathway; UMP from uracil: step 1/1. With respect to regulation, allosterically activated by GTP. Functionally, catalyzes the conversion of uracil and 5-phospho-alpha-D-ribose 1-diphosphate (PRPP) to UMP and diphosphate. The polypeptide is Uracil phosphoribosyltransferase (Clostridium tetani (strain Massachusetts / E88)).